The sequence spans 605 residues: Elongation factor 4 (605 aa).

The region spanning 9 to 192 (GMIRNFCIIA…AIVARVPAPA (184 aa)) is the tr-type G domain. Residues 21-26 (DHGKST) and 139-142 (NKID) contribute to the GTP site.

It belongs to the TRAFAC class translation factor GTPase superfamily. Classic translation factor GTPase family. LepA subfamily.

Its subcellular location is the cell inner membrane. It catalyses the reaction GTP + H2O = GDP + phosphate + H(+). Required for accurate and efficient protein synthesis under certain stress conditions. May act as a fidelity factor of the translation reaction, by catalyzing a one-codon backward translocation of tRNAs on improperly translocated ribosomes. Back-translocation proceeds from a post-translocation (POST) complex to a pre-translocation (PRE) complex, thus giving elongation factor G a second chance to translocate the tRNAs correctly. Binds to ribosomes in a GTP-dependent manner. The polypeptide is Elongation factor 4 (Chlorobaculum tepidum (strain ATCC 49652 / DSM 12025 / NBRC 103806 / TLS) (Chlorobium tepidum)).